The following is a 404-amino-acid chain: Cystinosin homolog (404 aa).

The Lumenal portion of the chain corresponds to 20–123; it reads TNNLVVRQKE…FARITVIRSH (104 aa). Asn-46, Asn-53, Asn-79, and Asn-97 each carry an N-linked (GlcNAc...) asparagine glycan. The helical transmembrane segment at 124–144 threads the bilayer; that stretch reads FLAILIQIVGWTYFFAWSISF. The PQ-loop 1 domain maps to 125–191; the sequence is LAILIQIVGW…MYYNSHVKNE (67 aa). The Cytoplasmic portion of the chain corresponds to 145–163; the sequence is YPQMYLNFKRKSVVGLNFD. Residues 164–184 traverse the membrane as a helical segment; it reads FLSLNLVGFCAYAIFNLLMYY. Over 185–207 the chain is Lumenal; the sequence is NSHVKNEYNIVNPRSPPPVLLND. The helical transmembrane segment at 208-228 threads the bilayer; it reads VVFAVHAFLACFITILQCLFY. Topologically, residues 229 to 238 are cytoplasmic; sequence ERDNQSVSSK. The chain crosses the membrane as a helical span at residues 239–259; it reads CIALMIVLISFGFCSAAATVL. At 260–263 the chain is on the lumenal side; sequence RKIQ. Residues 264 to 285 form a helical membrane-spanning segment; that stretch reads LLSFVTSLSYIKMAVTCCKYFP. The 62-residue stretch at 266–327 folds into the PQ-loop 2 domain; the sequence is SFVTSLSYIK…MILQAVNVND (62 aa). Residues 286-295 are Cytoplasmic-facing; sequence QAYFNYTRKS. Residues 296–316 traverse the membrane as a helical segment; that stretch reads TVGWSIGNIMLDFTGGTLDIL. At 317-337 the chain is on the lumenal side; sequence QMILQAVNVNDWSAFYANPVK. Residues 338 to 358 traverse the membrane as a helical segment; that stretch reads FGLGFVSIFFDIIFMVQHYVL. Residues 359–404 lie on the Cytoplasmic side of the membrane; the sequence is YPNAEVPHNEYHGVDNPNPDNIARDAEQYAGDSESMESTEPIIVHD.

This sequence belongs to the cystinosin family.

It localises to the lysosome membrane. It is found in the cytoplasmic vesicle. The protein localises to the phagosome. It catalyses the reaction L-cystine(out) + H(+)(out) = L-cystine(in) + H(+)(in). Functionally, cystine/H(+) symporter that mediates export of cystine, the oxidized dimer of cysteine, from lysosomes. May play a role in the degradation of engulfed apoptotic cells. The protein is Cystinosin homolog (ctns-1) of Caenorhabditis elegans.